We begin with the raw amino-acid sequence, 141 residues long: Large ribosomal subunit protein uL11 (141 aa).

Belongs to the universal ribosomal protein uL11 family. As to quaternary structure, part of the ribosomal stalk of the 50S ribosomal subunit. Interacts with L10 and the large rRNA to form the base of the stalk. L10 forms an elongated spine to which L12 dimers bind in a sequential fashion forming a multimeric L10(L12)X complex. In terms of processing, one or more lysine residues are methylated.

Forms part of the ribosomal stalk which helps the ribosome interact with GTP-bound translation factors. The sequence is that of Large ribosomal subunit protein uL11 from Gloeothece citriformis (strain PCC 7424) (Cyanothece sp. (strain PCC 7424)).